The following is a 758-amino-acid chain: MPNFCAAPNCTRKSTQSDLAFFRFPRDPARCQKWVENCRRADLEDKTPDQLNKHYRLCAKHFETSMICRTSPYRTVLRDNAIPTIFDLTSHLNNPHSRHRKRIKELSEDEIRTLKQKKIEETSEQEQETNTNAQNPSAEAVNQQDANVLPLTLEEKENKEYLKSLFEILVLMGKQNIPLDGHEADEVPEGLFAPDNFQALLECRINSGEEVLRKRFEATAVNTLFCSKTQQRHMLEICESCIREETLREVRDSHFFSIITDDVVDIAGEEHLPVLVRFVDDAHNLREEFVGFLPYEADAEILAVKFHTTITEKWGLNMEYCRGQAYIVSSGFSSKMKVVASRLLEKYPQAVYTLCSSCALNAWLAKSVPVIGVSVALGTIEEVCSFFHRSPQLLLELDSVISVLFQNSEERAKELKEICHSQWTGRHDAFEILVDLLQALVLCLDGIINSDTNVRWNNYIAGRAFVLCSAVTDFDFIVTIVVLKNVLSFTRAFGKNLQGQTSDVFFAASSLTAVLHSLNEVMENIEVYHEFWFEEATNLATKLDIQMKLPGKFRRAQQGNLESQLTSESYYKDTLSVPTVEHIIQELKDIFSEQHLKALKCLSLVPSVMGQLKFNTSEEHHADMYRSDLPNPDTLSAELHCWRIKWKHRGKDIELPSTIYEALHLPDIKFFPNVYALLKVLCILPVMKVENERYENGRKRLKAYLRNTLTDQRSSNLALLNINFDIKHDLDLMVDTYIKLYTNKSELPTINSETIENT.

The THAP-type zinc finger occupies M1–F86. The interval Q116–V141 is disordered. Position 563 is a phosphoserine (S563).

In terms of assembly, interacts with DNAJC3, probably sequestring it.

Its function is as follows. Upstream regulator of interferon-induced serine/threonine protein kinase R (PKR). May block the PKR-inhibitory function of DNAJC3, resulting in restoration of kinase activity and suppression of cell growth. In Mus musculus (Mouse), this protein is 52 kDa repressor of the inhibitor of the protein kinase.